Here is a 540-residue protein sequence, read N- to C-terminus: uncharacterized protein (540 aa).

The N-terminal 58 residues, Met-1–Leu-58, are a transit peptide targeting the chloroplast. A Protein kinase domain is found at Tyr-195–Asn-533. Residues Ile-201–Val-209 and Lys-224 each bind ATP. Asp-362 serves as the catalytic Proton acceptor.

This sequence belongs to the protein kinase superfamily. ADCK protein kinase family.

The protein resides in the plastid. Its subcellular location is the chloroplast. The protein localises to the plastoglobule. This is an uncharacterized protein from Arabidopsis thaliana (Mouse-ear cress).